Reading from the N-terminus, the 64-residue chain is uncharacterized protein (64 aa).

This is an uncharacterized protein from Sulfolobus islandicus filamentous virus (isolate Iceland/Hveragerdi) (SIFV).